The primary structure comprises 456 residues: Phospholipase A1 member A (456 aa).

An N-terminal signal peptide occupies residues 1–25 (MRPGLWETCFWLWGPLLWLSIGSSG). Catalysis depends on S166, which acts as the Nucleophile. D190 (charge relay system) is an active-site residue. C245 and C258 are disulfide-bonded. The active-site Charge relay system is the H260. Disulfide bonds link C282-C293 and C296-C304. N-linked (GlcNAc...) asparagine glycosylation is present at N365.

The protein belongs to the AB hydrolase superfamily. Lipase family.

The protein localises to the secreted. The enzyme catalyses a 1,2-diacyl-sn-glycero-3-phospho-L-serine + H2O = a 2-acyl-sn-glycero-3-phospho-L-serine + a fatty acid + H(+). It catalyses the reaction 1,2-di-(9Z)-octadecenoyl-sn-glycero-3-phospho-L-serine + H2O = 2-(9Z-octadecenoyl)-sn-glycero-3-phospho-L-serine + (9Z)-octadecenoate + H(+). The catalysed reaction is 1-hexadecanoyl-2-(5Z,8Z,11Z,14Z-eicosatetraenoyl)-sn-glycero-3-phospho-L-serine + H2O = 2-(5Z,8Z,11Z,14Z)-eicosatetraenoyl-sn-glycero-3-phospho-L-serine + hexadecanoate + H(+). It carries out the reaction a 1-acyl-sn-glycero-3-phospho-L-serine + H2O = sn-glycero-3-phospho-L-serine + a fatty acid + H(+). The enzyme catalyses 1-(9Z-octadecenoyl)-sn-glycero-3-phospho-L-serine + H2O = sn-glycero-3-phospho-L-serine + (9Z)-octadecenoate + H(+). Its function is as follows. Hydrolyzes the ester bond of the acyl group attached at the sn-1 position of phosphatidylserines (phospholipase A1 activity) and 1-acyl-2-lysophosphatidylserines (lysophospholipase activity) in the pathway of phosphatidylserines acyl chain remodeling. Cleaves phosphatidylserines exposed on the outer leaflet of the plasma membrane of apoptotic cells producing 2-acyl-1-lysophosphatidylserines, which in turn enhance mast cell activation and histamine production. Has no activity toward other glycerophospholipids including phosphatidylcholines, phosphatidylethanolamines, phosphatidic acids or phosphatidylinositols, or glycerolipids such as triolein. This is Phospholipase A1 member A from Mus musculus (Mouse).